We begin with the raw amino-acid sequence, 124 residues long: uncharacterized protein (124 aa).

Helical transmembrane passes span 13–33 (LIQI…VLQL), 43–63 (GLFW…PEFF), and 71–91 (GVGR…FYLI).

This sequence to M.thermoautotrophicum MTH137.

The protein localises to the cell membrane. This is an uncharacterized protein from Methanocaldococcus jannaschii (strain ATCC 43067 / DSM 2661 / JAL-1 / JCM 10045 / NBRC 100440) (Methanococcus jannaschii).